We begin with the raw amino-acid sequence, 49 residues long: Large ribosomal subunit protein bL33B (49 aa).

The protein belongs to the bacterial ribosomal protein bL33 family.

This Lactobacillus gasseri (strain ATCC 33323 / DSM 20243 / BCRC 14619 / CIP 102991 / JCM 1131 / KCTC 3163 / NCIMB 11718 / NCTC 13722 / AM63) protein is Large ribosomal subunit protein bL33B.